We begin with the raw amino-acid sequence, 841 residues long: MGKTQKKNSKGRLDRYYYLAKEKGYRARSSFKIIQINEKYGHFLEKSKVVIDLCAAPGSWCQVASKLCPVNSLIIGVDIVPMKPMPNVITFQSDITTEDCRSKLRGYMKTWKADTVLHDGAPNVGLGWVQDAFTQSQLTLQALKLAVENLVVNGTFVTKIFRSKDYNKLIWVFQQLFEKVEATKPPASRNVSAEIFVVCKGFKAPKRLDPRLLDPKEVFEELPDGQQNMESKIYNPEKKVRKRQGYEEGDNLLYHETSILDFVRTEDPISMLGEMNKFTIDENDHEWKILKKLKQTTDEFRSCIEDLKVLGKKDFKMILRWRKIAREILGIEVKDDAKTEIEVVPLTEEEQIEKDLQGLQEKQRLNVKRERRRKNEMKQKELQRMQMNMITPTDIGIEAASLGKESLFNLKTAEKTGILNDLAKGKKRMIFTDDELAKDNDIYIDENIMIKDKDSAADADDLESELNAMYSDYKTRRSERDAKFRAKQARGGDNEEEWTGFNEGSLEKKEEEGKDYIEDNDDEGVEGDSDDDEAITNLISKLKGQEGDHKLSSKARMIFNDPIFNNVEPDLPVNTVNDGIMSSESVGDISKLNKKRKHEEMHQKQDEADSSDESSSDDSDFEIVANDNASEEFDSDYDSEEEKNQTKKEKHSRDIDIATVEAMTLAHQLALGQKNKHDLVDEGFNRYTFRDTENLPDWFLEDEKEHSKINKPITKEAAMAIKEKIKAMNARPIKKVAEAKARKRMRAVARLEKIKKKAGLINDDSDKTEKDKAEEISRLMRKVTKKPKTKPKVTLVVASGRNKGLAGRPKGVKGKYKMVDGVMKNEQRALRRIAKKHHKKK.

S-adenosyl-L-methionine is bound by residues Gly58, Trp60, Asp78, Asp94, and Asp119. Lys159 functions as the Proton acceptor in the catalytic mechanism. Residues 360-389 (QEKQRLNVKRERRRKNEMKQKELQRMQMNM) adopt a coiled-coil conformation. Phosphoserine is present on residues Ser455 and Ser464. 2 disordered regions span residues 480–534 (RDAK…DDEA) and 565–654 (NNVE…HSRD). Over residues 505 to 517 (SLEKKEEEGKDYI) the composition is skewed to basic and acidic residues. Residues 518-534 (EDNDDEGVEGDSDDDEA) are compositionally biased toward acidic residues. A Phosphoserine modification is found at Ser529. Over residues 574 to 585 (NTVNDGIMSSES) the composition is skewed to polar residues. Basic and acidic residues predominate over residues 598–607 (HEEMHQKQDE). Acidic residues-rich tracts occupy residues 608-621 (ADSS…DSDF) and 629-641 (ASEE…DSEE). Residues 642 to 654 (EKNQTKKEKHSRD) are compositionally biased toward basic and acidic residues.

This sequence belongs to the class I-like SAM-binding methyltransferase superfamily. RNA methyltransferase RlmE family. SPB1 subfamily. Component of the nucleolar and nucleoplasmic pre-60S ribosomal particle. Interacts with the snoRNA-associated proteins NOP1 and NOP58.

It localises to the nucleus. It is found in the nucleolus. It carries out the reaction guanosine(2922) in 27S pre-rRNA + S-adenosyl-L-methionine = 2'-O-methylguanosine(2922) in 27S pre-rRNA + S-adenosyl-L-homocysteine + H(+). Required for proper assembly of pre-ribosomal particles during the biogenesis of the 60S ribosomal subunit. Specifically methylates the guanosine in position 2922 of the 25S rRNA at the stage of 27S pre-rRNA maturation. Also methylates the uridine in position 2921 in the absence of methylation of this residue guided by snoRNA snR52 at the stage of 35S pre-rRNA maturation. This Saccharomyces cerevisiae (strain ATCC 204508 / S288c) (Baker's yeast) protein is 27S pre-rRNA (guanosine(2922)-2'-O)-methyltransferase.